Consider the following 488-residue polypeptide: RNA binding exosome specificity factor Mmi1 (488 aa).

3 stretches are compositionally biased toward polar residues: residues 1-14 (MSNT…SSKS), 33-47 (LNES…TTHT), and 54-66 (SVLS…NFSS). Disordered regions lie at residues 1–20 (MSNT…ELPN) and 25–80 (RSLW…DAPI). The span at 71–80 (PAPESHDAPI) shows a compositional bias: basic and acidic residues. Positions 95–122 (GKYDFSRHCTDYGHSYEWPYFRSLRRES) are interaction with erh1. Disordered regions lie at residues 163–185 (SRLH…RRLA) and 225–261 (SYPV…TRAS). A Phosphothreonine modification is found at T176. Phosphoserine is present on residues S178, S230, S231, S261, S263, and S265. Low complexity predominate over residues 289 to 299 (SYLLSNSSNDS). The segment at 289–328 (SYLLSNSSNDSASRKEKPKARASTPPPLNFSRASEHRNEK) is disordered. S311 is subject to Phosphoserine. T312 carries the post-translational modification Phosphothreonine. A YTH domain is found at 350 to 476 (SRYFIMLCDN…DEGSRLCTLI (127 aa)).

As to quaternary structure, component of the erh1-mmi1 complex composed of mmi1 and erh1. Interacts (via N-terminus) with erh1 in a 2:2 stoichiometry. Interacts with rrp6.

It localises to the nucleus. RNA-binding protein that recognizes and binds N6-methyladenosine (m6A)-containing RNAs, a modification present at internal sites of mRNAs and some non-coding RNAs. Functions alone and as part of the erh1-mmi1 complex, to recruit the CCR4-NOT complex and the NURS complex to target RNAs. Suppresses the meiotic program during vegetative growth and promotes the meiotic program during mating. Binds to DSR (determinant of selective removal) regions in meiotic mRNA, and recruits the NURS complex to targets. Recruitment of NURS complex to target mRNAs promotes mRNA decay by engagement of the nuclear exosome, and formation of heterochromatin islands at meiotic genes silenced by the exosome. Recruitment of the CCR4-NOT complex to target RNAs promotes heterochromatin formation at RNAi-dependent heterochromatin domains (HOODs), including a subset of meiotic genes, lncRNAs and retrotransposons. Recruitment of the CCR4-NOT complex to rDNA promotes rDNA heterochromatin assembly. Promotes non-canonical transcription termination at meiotic genes and prevents lncRNA transcription from invading and repressing adjacent genes. The protein is RNA binding exosome specificity factor Mmi1 (mmi1) of Schizosaccharomyces pombe (strain 972 / ATCC 24843) (Fission yeast).